The chain runs to 502 residues: Dipeptide and tripeptide permease A (502 aa).

Over 1–35 (MSTANNKPTDESVSLNAFKQPKAFYLIFSIELWER) the chain is Cytoplasmic. A helical transmembrane segment spans residues 36–56 (FGFYGLQGIMAVYLVKQLGMS). Residues 57 to 60 (EADS) lie on the Periplasmic side of the membrane. Residues 61 to 81 (ITLFSSFSALVYGLVAVGGWL) traverse the membrane as a helical segment. The Cytoplasmic portion of the chain corresponds to 82–90 (GDKVLGTKR). A helical membrane pass occupies residues 91-111 (VIMLGAVVLAIGYGLVAWSGH). Position 112 (Asp-112) is a topological domain, periplasmic. The helical transmembrane segment at 113–133 (AAVVYMGMATIAVGNGLFKAN) threads the bilayer. Residues 134-154 (PSSLLSTCYNKDDPRLDGAFT) are Cytoplasmic-facing. Residues 155 to 175 (MYYMSINIGSFFSMLATPWLA) form a helical membrane-spanning segment. Residues 176-179 (AKFG) lie on the Periplasmic side of the membrane. A helical membrane pass occupies residues 180 to 200 (WSVAFALSFVGMLITVVNFLF). The Cytoplasmic portion of the chain corresponds to 201-218 (CRSWVKNYGSKPDFEPVH). The helical transmembrane segment at 219 to 239 (IGKLLATIVGVVILATIATWL) threads the bilayer. Over 240–247 (LHNQGVAR) the chain is Periplasmic. The chain crosses the membrane as a helical span at residues 248 to 268 (AVLGVVALGIICIFAKEAFAM). At 269 to 275 (QGAARRK) the chain is on the cytoplasmic side. The helical transmembrane segment at 276-296 (MIVAFILMLQAVVFFVLYSQM) threads the bilayer. The Periplasmic portion of the chain corresponds to 297 to 321 (PTSLNFFAIRNVEHSILSIAFEPEQ). The chain crosses the membrane as a helical span at residues 322 to 342 (FQALNPFWIMIGSPILAAIYN). Over 343–353 (KMGDRLPMPHK) the chain is Cytoplasmic. A helical transmembrane segment spans residues 354–374 (FAIGMVLCSGAFLVLPLGTKF). The Periplasmic portion of the chain corresponds to 375 to 384 (ATDAGIVSVN). Residues 385–405 (WLILSYALQSIGELMISGLGL) traverse the membrane as a helical segment. The Cytoplasmic segment spans residues 406–415 (AMVAQLVPQR). The chain crosses the membrane as a helical span at residues 416 to 436 (LMGFIMGSWFLTTAGAALIAG). Residues 437–460 (KIANLMAVPENVTDPLVSLEVYGR) lie on the Periplasmic side of the membrane. The helical transmembrane segment at 461-481 (VFMQIGIATAVIAVLMLLTAP) threads the bilayer. The Cytoplasmic portion of the chain corresponds to 482-502 (KLNRMTLEDDKAAKATDTATA).

This sequence belongs to the major facilitator superfamily. Proton-dependent oligopeptide transporter (POT/PTR) (TC 2.A.17) family. DtpA subfamily.

The protein resides in the cell inner membrane. Proton-dependent permease that transports di- and tripeptides. This chain is Dipeptide and tripeptide permease A, found in Enterobacter sp. (strain 638).